The sequence spans 341 residues: Lipoyl synthase (341 aa).

Cys-85, Cys-90, Cys-96, Cys-111, Cys-115, Cys-118, and Ser-325 together coordinate [4Fe-4S] cluster. A Radical SAM core domain is found at 97–314; the sequence is FSGGTATFMI…AEEGYKMGFK (218 aa).

Belongs to the radical SAM superfamily. Lipoyl synthase family. It depends on [4Fe-4S] cluster as a cofactor.

It localises to the cytoplasm. The catalysed reaction is [[Fe-S] cluster scaffold protein carrying a second [4Fe-4S](2+) cluster] + N(6)-octanoyl-L-lysyl-[protein] + 2 oxidized [2Fe-2S]-[ferredoxin] + 2 S-adenosyl-L-methionine + 4 H(+) = [[Fe-S] cluster scaffold protein] + N(6)-[(R)-dihydrolipoyl]-L-lysyl-[protein] + 4 Fe(3+) + 2 hydrogen sulfide + 2 5'-deoxyadenosine + 2 L-methionine + 2 reduced [2Fe-2S]-[ferredoxin]. It participates in protein modification; protein lipoylation via endogenous pathway; protein N(6)-(lipoyl)lysine from octanoyl-[acyl-carrier-protein]: step 2/2. Its function is as follows. Catalyzes the radical-mediated insertion of two sulfur atoms into the C-6 and C-8 positions of the octanoyl moiety bound to the lipoyl domains of lipoate-dependent enzymes, thereby converting the octanoylated domains into lipoylated derivatives. This chain is Lipoyl synthase, found in Pseudomonas fluorescens (strain SBW25).